Reading from the N-terminus, the 120-residue chain is Small ribosomal subunit protein uS13 (120 aa).

The tract at residues 93-120 is disordered; sequence RRGLPCRGQKTKTNARTRKGKRKTVGAA.

The protein belongs to the universal ribosomal protein uS13 family. Part of the 30S ribosomal subunit. Forms a loose heterodimer with protein S19. Forms two bridges to the 50S subunit in the 70S ribosome.

Its function is as follows. Located at the top of the head of the 30S subunit, it contacts several helices of the 16S rRNA. In the 70S ribosome it contacts the 23S rRNA (bridge B1a) and protein L5 of the 50S subunit (bridge B1b), connecting the 2 subunits; these bridges are implicated in subunit movement. Contacts the tRNAs in the A and P-sites. This is Small ribosomal subunit protein uS13 from Sulfurimonas denitrificans (strain ATCC 33889 / DSM 1251) (Thiomicrospira denitrificans (strain ATCC 33889 / DSM 1251)).